A 383-amino-acid chain; its full sequence is Transposase InsI for insertion sequence element IS30C (383 aa).

In terms of domain architecture, Integrase catalytic spans 213–379 (VNGTPIHERS…TPKEIIERGV (167 aa)).

This sequence belongs to the transposase IS30 family.

Required for the transposition of the insertion element. This chain is Transposase InsI for insertion sequence element IS30C (insI3), found in Escherichia coli (strain K12).